Reading from the N-terminus, the 185-residue chain is NEDD8-conjugating enzyme UBE2F (185 aa).

Positions 1–21 are disordered; the sequence is MLTLASKLKRDDGVKGSRTTS. The segment at 1-29 is interaction with uba3; sequence MLTLASKLKRDDGVKGSRTTSTTLDSMRR. Positions 32–185 constitute a UBC core domain; it reads VRDRLLVKEV…VEDYIKRYAR (154 aa). The active-site Glycyl thioester intermediate is C116.

Belongs to the ubiquitin-conjugating enzyme family. UBE2F subfamily.

It carries out the reaction [E1 NEDD8-activating enzyme]-S-[NEDD8 protein]-yl-L-cysteine + [E2 NEDD8-conjugating enzyme]-L-cysteine = [E1 NEDD8-activating enzyme]-L-cysteine + [E2 NEDD8-conjugating enzyme]-S-[NEDD8-protein]-yl-L-cysteine.. It participates in protein modification; protein neddylation. Its function is as follows. Accepts the ubiquitin-like protein NEDD8 from the UBA3-NAE1 E1 complex and catalyzes its covalent attachment to other proteins. Together with the E3 ubiquitin ligase rnf7/rbx2, specifically neddylates cullin-5 (cul5). Does not neddylate cul1, cul2, cul3, cul4a or cul4b. The sequence is that of NEDD8-conjugating enzyme UBE2F (ube2f) from Xenopus laevis (African clawed frog).